A 371-amino-acid polypeptide reads, in one-letter code: Dual-specificity RNA methyltransferase RlmN (371 aa).

The Proton acceptor role is filled by glutamate 92. One can recognise a Radical SAM core domain in the interval glutamate 98–aspartate 337. A disulfide bridge links cysteine 105 with cysteine 342. Residues cysteine 112, cysteine 116, and cysteine 119 each coordinate [4Fe-4S] cluster. S-adenosyl-L-methionine-binding positions include glycine 166–glutamate 167, serine 198, serine 220–histidine 222, and asparagine 299. Cysteine 342 acts as the S-methylcysteine intermediate in catalysis.

The protein belongs to the radical SAM superfamily. RlmN family. The cofactor is [4Fe-4S] cluster.

The protein resides in the cytoplasm. The catalysed reaction is adenosine(2503) in 23S rRNA + 2 reduced [2Fe-2S]-[ferredoxin] + 2 S-adenosyl-L-methionine = 2-methyladenosine(2503) in 23S rRNA + 5'-deoxyadenosine + L-methionine + 2 oxidized [2Fe-2S]-[ferredoxin] + S-adenosyl-L-homocysteine. It carries out the reaction adenosine(37) in tRNA + 2 reduced [2Fe-2S]-[ferredoxin] + 2 S-adenosyl-L-methionine = 2-methyladenosine(37) in tRNA + 5'-deoxyadenosine + L-methionine + 2 oxidized [2Fe-2S]-[ferredoxin] + S-adenosyl-L-homocysteine. In terms of biological role, specifically methylates position 2 of adenine 2503 in 23S rRNA and position 2 of adenine 37 in tRNAs. m2A2503 modification seems to play a crucial role in the proofreading step occurring at the peptidyl transferase center and thus would serve to optimize ribosomal fidelity. In Actinobacillus succinogenes (strain ATCC 55618 / DSM 22257 / CCUG 43843 / 130Z), this protein is Dual-specificity RNA methyltransferase RlmN.